The chain runs to 1594 residues: Mucin-like protein (1594 aa).

Topologically, residues 1–1530 (DTTAGPDTTS…YETREDGLEM (1530 aa)) are extracellular. 3 TSP type-1 domains span residues 141–196 (DGGF…GSCP), 198–253 (DGNF…PPCP), and 255–310 (DGNF…GPCP). Intrachain disulfides connect Cys-153-Cys-190, Cys-157-Cys-195, Cys-168-Cys-180, Cys-210-Cys-247, Cys-214-Cys-252, Cys-225-Cys-237, Cys-267-Cys-304, Cys-271-Cys-309, and Cys-282-Cys-294. The region spanning 400–566 (LTISDDAFEQ…GVWFFRLEMN (167 aa)) is the NIDO domain. The AMOP domain occupies 568–706 (ILSLAGKKCN…RSCFGYTLRR (139 aa)). The VWFD domain maps to 706–901 (RRGLIFGDPH…KWQINASQSL (196 aa)). 2 EGF-like domains span residues 1063–1108 (LILL…QYCQ) and 1110–1156 (KIDA…SICE). Disulfide bonds link Cys-1067-Cys-1075, Cys-1069-Cys-1096, Cys-1098-Cys-1107, Cys-1114-Cys-1127, Cys-1121-Cys-1141, Cys-1144-Cys-1155, Cys-1161-Cys-1173, Cys-1169-Cys-1182, Cys-1285-Cys-1296, Cys-1292-Cys-1305, Cys-1307-Cys-1320, Cys-1326-Cys-1341, Cys-1334-Cys-1350, and Cys-1352-Cys-1363. Residues 1157 to 1191 (DIDECSDANVSKCDHSCINLPGSYVCDCNQGFSLE) enclose the EGF-like 3; calcium-binding domain. The EGF-like 4; calcium-binding domain maps to 1281–1321 (DINECTTHRHKCSQICHNLDGSYTCSCQPGFNLSPDQTTCE). The EGF-like 5; calcium-binding domain maps to 1322–1364 (DIDECGLINEAHCEGSLEICINTMGSFRCECQDGFHRVNDTCQ). A helical membrane pass occupies residues 1531 to 1551 (IWLLVGVSVAVAVPLMIVIVI). Residues 1552-1593 (LYREYRRIAKQRRKTNNFDLRQWSGARERTIYSGFTNSKSAR) lie on the Cytoplasmic side of the membrane.

As to expression, component of the acid-insoluble and acid-soluble organic matrix of the aragonitic skeleton (at protein level).

It is found in the membrane. This is Mucin-like protein from Acropora millepora (Staghorn coral).